A 331-amino-acid polypeptide reads, in one-letter code: Tetraacyldisaccharide 4'-kinase (331 aa).

60–67 (TIGGTGKT) contributes to the ATP binding site.

Belongs to the LpxK family.

The catalysed reaction is a lipid A disaccharide + ATP = a lipid IVA + ADP + H(+). The protein operates within glycolipid biosynthesis; lipid IV(A) biosynthesis; lipid IV(A) from (3R)-3-hydroxytetradecanoyl-[acyl-carrier-protein] and UDP-N-acetyl-alpha-D-glucosamine: step 6/6. Functionally, transfers the gamma-phosphate of ATP to the 4'-position of a tetraacyldisaccharide 1-phosphate intermediate (termed DS-1-P) to form tetraacyldisaccharide 1,4'-bis-phosphate (lipid IVA). The sequence is that of Tetraacyldisaccharide 4'-kinase from Pseudomonas syringae pv. tomato (strain ATCC BAA-871 / DC3000).